The primary structure comprises 380 residues: Cytochrome b (380 aa).

4 consecutive transmembrane segments (helical) span residues 34-54, 78-99, 114-134, and 179-199; these read FGSLLGICLVTQILTGLLLAM, WLIRNLHANGASLFFICIYLHI, WNTGVILLLTLMATAFVGYVL, and FFALHFLLPFMIAGLTLIHLT. Positions 84 and 98 each coordinate heme b. Histidine 183 and histidine 197 together coordinate heme b. Histidine 202 lines the a ubiquinone pocket. A run of 4 helical transmembrane segments spans residues 227-247, 289-309, 321-341, and 348-368; these read LKDFLGFALMLFLLTALALFT, LGGVLALAASVLVLLLVPFLH, LSQTLFWILVSNLFILTWIGS, and FITIGQLASITYFTIILILFP.

This sequence belongs to the cytochrome b family. In terms of assembly, the cytochrome bc1 complex contains 11 subunits: 3 respiratory subunits (MT-CYB, CYC1 and UQCRFS1), 2 core proteins (UQCRC1 and UQCRC2) and 6 low-molecular weight proteins (UQCRH/QCR6, UQCRB/QCR7, UQCRQ/QCR8, UQCR10/QCR9, UQCR11/QCR10 and a cleavage product of UQCRFS1). This cytochrome bc1 complex then forms a dimer. Requires heme b as cofactor.

Its subcellular location is the mitochondrion inner membrane. Its function is as follows. Component of the ubiquinol-cytochrome c reductase complex (complex III or cytochrome b-c1 complex) that is part of the mitochondrial respiratory chain. The b-c1 complex mediates electron transfer from ubiquinol to cytochrome c. Contributes to the generation of a proton gradient across the mitochondrial membrane that is then used for ATP synthesis. This Coracias caudatus (Lilac-breasted roller) protein is Cytochrome b (MT-CYB).